The chain runs to 216 residues: Protein GrpE (216 aa).

Disordered regions lie at residues 1-45 (MTEE…LDPT) and 185-216 (RVAVAEPQPGATPAAAKEEKTDDEESGGTEEV). Acidic residues predominate over residues 205–216 (TDDEESGGTEEV).

It belongs to the GrpE family. As to quaternary structure, homodimer.

It localises to the cytoplasm. Its function is as follows. Participates actively in the response to hyperosmotic and heat shock by preventing the aggregation of stress-denatured proteins, in association with DnaK and GrpE. It is the nucleotide exchange factor for DnaK and may function as a thermosensor. Unfolded proteins bind initially to DnaJ; upon interaction with the DnaJ-bound protein, DnaK hydrolyzes its bound ATP, resulting in the formation of a stable complex. GrpE releases ADP from DnaK; ATP binding to DnaK triggers the release of the substrate protein, thus completing the reaction cycle. Several rounds of ATP-dependent interactions between DnaJ, DnaK and GrpE are required for fully efficient folding. This Streptomyces griseus subsp. griseus (strain JCM 4626 / CBS 651.72 / NBRC 13350 / KCC S-0626 / ISP 5235) protein is Protein GrpE.